Reading from the N-terminus, the 268-residue chain is 4-hydroxy-tetrahydrodipicolinate reductase (268 aa).

NAD(+) contacts are provided by residues 10 to 15 and D36; that span reads GASGRM. R37 contacts NADP(+). Residues 99–101 and 123–126 each bind NAD(+); these read GTT and SANM. H156 acts as the Proton donor/acceptor in catalysis. H157 is a (S)-2,3,4,5-tetrahydrodipicolinate binding site. K160 functions as the Proton donor in the catalytic mechanism. (S)-2,3,4,5-tetrahydrodipicolinate is bound at residue 166-167; that stretch reads GT.

Belongs to the DapB family.

The protein localises to the cytoplasm. The catalysed reaction is (S)-2,3,4,5-tetrahydrodipicolinate + NAD(+) + H2O = (2S,4S)-4-hydroxy-2,3,4,5-tetrahydrodipicolinate + NADH + H(+). It catalyses the reaction (S)-2,3,4,5-tetrahydrodipicolinate + NADP(+) + H2O = (2S,4S)-4-hydroxy-2,3,4,5-tetrahydrodipicolinate + NADPH + H(+). Its pathway is amino-acid biosynthesis; L-lysine biosynthesis via DAP pathway; (S)-tetrahydrodipicolinate from L-aspartate: step 4/4. Functionally, catalyzes the conversion of 4-hydroxy-tetrahydrodipicolinate (HTPA) to tetrahydrodipicolinate. The polypeptide is 4-hydroxy-tetrahydrodipicolinate reductase (Burkholderia mallei (strain NCTC 10247)).